We begin with the raw amino-acid sequence, 665 residues long: Phenol hydroxylase (665 aa).

Residues 18 to 19 (PA), 43 to 45 (DKR), 51 to 56 (NGQADG), Q118, Y290, D358, and 368 to 372 (GQGMN) each bind FAD. D55 serves as a coordination point for substrate. Y290 is a substrate binding site.

This sequence belongs to the PheA/TfdB FAD monooxygenase family. Homodimer. FAD is required as a cofactor.

It catalyses the reaction phenol + NADPH + O2 + H(+) = catechol + NADP(+) + H2O. It participates in aromatic compound metabolism; phenol degradation. With respect to regulation, inhibited by excess phenol. Heavy metals such AsCuSO(4), AgNO(3), or HgCl(2) severely inhibit activity. Hydroxylates phenol to catechol. Phenol is the best substrate, but the enzyme also accepts isomeric diphenols, hydroxyl-, amino-, halogen- or methyl-substituted phenols and, to a lesser degree, cresols. In Cutaneotrichosporon cutaneum (Yeast), this protein is Phenol hydroxylase.